Consider the following 131-residue polypeptide: Probable flagellum biosynthesis repressor protein FlbT (131 aa).

This sequence belongs to the FlbT family.

In terms of biological role, has a post-transcriptional repressor function in flagellum biogenesis. Associates with the 5'-UTR of fljK mRNA and promotes its degradation. The sequence is that of Probable flagellum biosynthesis repressor protein FlbT from Caulobacter sp. (strain K31).